A 197-amino-acid chain; its full sequence is Imidazoleglycerol-phosphate dehydratase (197 aa).

Belongs to the imidazoleglycerol-phosphate dehydratase family.

It is found in the cytoplasm. The catalysed reaction is D-erythro-1-(imidazol-4-yl)glycerol 3-phosphate = 3-(imidazol-4-yl)-2-oxopropyl phosphate + H2O. It participates in amino-acid biosynthesis; L-histidine biosynthesis; L-histidine from 5-phospho-alpha-D-ribose 1-diphosphate: step 6/9. The protein is Imidazoleglycerol-phosphate dehydratase of Azotobacter vinelandii (strain DJ / ATCC BAA-1303).